We begin with the raw amino-acid sequence, 170 residues long: Xanthine-guanine phosphoribosyltransferase (170 aa).

5-phospho-alpha-D-ribose 1-diphosphate-binding positions include 41–42 (RG) and 98–106 (DDLTDTGKT). Position 99 (aspartate 99) interacts with Mg(2+). Residue aspartate 102 participates in guanine binding. Aspartate 102 is a binding site for xanthine. 102 to 106 (DTGKT) provides a ligand contact to GMP.

The protein belongs to the purine/pyrimidine phosphoribosyltransferase family. XGPT subfamily. In terms of assembly, homotetramer. It depends on Mg(2+) as a cofactor.

It is found in the cell inner membrane. The catalysed reaction is GMP + diphosphate = guanine + 5-phospho-alpha-D-ribose 1-diphosphate. The enzyme catalyses XMP + diphosphate = xanthine + 5-phospho-alpha-D-ribose 1-diphosphate. It catalyses the reaction IMP + diphosphate = hypoxanthine + 5-phospho-alpha-D-ribose 1-diphosphate. It participates in purine metabolism; GMP biosynthesis via salvage pathway; GMP from guanine: step 1/1. It functions in the pathway purine metabolism; XMP biosynthesis via salvage pathway; XMP from xanthine: step 1/1. Functionally, purine salvage pathway enzyme that catalyzes the transfer of the ribosyl-5-phosphate group from 5-phospho-alpha-D-ribose 1-diphosphate (PRPP) to the N9 position of the 6-oxopurines guanine and xanthine to form the corresponding ribonucleotides GMP (guanosine 5'-monophosphate) and XMP (xanthosine 5'-monophosphate), with the release of PPi. To a lesser extent, also acts on hypoxanthine. This chain is Xanthine-guanine phosphoribosyltransferase, found in Brucella abortus (strain 2308).